The sequence spans 506 residues: Maturase K (506 aa).

This sequence belongs to the intron maturase 2 family. MatK subfamily.

It localises to the plastid. Its subcellular location is the chloroplast. In terms of biological role, usually encoded in the trnK tRNA gene intron. Probably assists in splicing its own and other chloroplast group II introns. The sequence is that of Maturase K from Ocimum basilicum (Sweet basil).